The chain runs to 465 residues: Ribulose bisphosphate carboxylase large chain (465 aa).

At K4 the chain carries N6,N6,N6-trimethyllysine. Positions 113 and 163 each coordinate substrate. K165 acts as the Proton acceptor in catalysis. K167 contacts substrate. K191, D193, and E194 together coordinate Mg(2+). K191 carries the N6-carboxylysine modification. H284 functions as the Proton acceptor in the catalytic mechanism. Residues R285, H317, and S369 each contribute to the substrate site.

This sequence belongs to the RuBisCO large chain family. Type I subfamily. In terms of assembly, heterohexadecamer of 8 large chains and 8 small chains; disulfide-linked. The disulfide link is formed within the large subunit homodimers. The cofactor is Mg(2+). In terms of processing, the disulfide bond which can form in the large chain dimeric partners within the hexadecamer appears to be associated with oxidative stress and protein turnover.

The protein localises to the plastid. The protein resides in the chloroplast. It carries out the reaction 2 (2R)-3-phosphoglycerate + 2 H(+) = D-ribulose 1,5-bisphosphate + CO2 + H2O. The catalysed reaction is D-ribulose 1,5-bisphosphate + O2 = 2-phosphoglycolate + (2R)-3-phosphoglycerate + 2 H(+). Its function is as follows. RuBisCO catalyzes two reactions: the carboxylation of D-ribulose 1,5-bisphosphate, the primary event in carbon dioxide fixation, as well as the oxidative fragmentation of the pentose substrate in the photorespiration process. Both reactions occur simultaneously and in competition at the same active site. This is Ribulose bisphosphate carboxylase large chain from Bauera rubioides (Dog rose).